We begin with the raw amino-acid sequence, 92 residues long: UPF0250 protein COSY_0496 (92 aa).

It belongs to the UPF0250 family.

This chain is UPF0250 protein COSY_0496, found in Vesicomyosocius okutanii subsp. Calyptogena okutanii (strain HA).